Here is a 914-residue protein sequence, read N- to C-terminus: Isoleucine--tRNA ligase (914 aa).

Residues 64–74 carry the 'HIGH' region motif; sequence PYANGNFHLGH. Glu-557 serves as a coordination point for L-isoleucyl-5'-AMP. The short motif at 598–602 is the 'KMSKS' region element; that stretch reads PMSKS. Residue Lys-601 coordinates ATP. Zn(2+) contacts are provided by Cys-889, Cys-892, Cys-906, and Cys-909.

Belongs to the class-I aminoacyl-tRNA synthetase family. IleS type 1 subfamily. In terms of assembly, monomer. It depends on Zn(2+) as a cofactor.

It localises to the cytoplasm. The catalysed reaction is tRNA(Ile) + L-isoleucine + ATP = L-isoleucyl-tRNA(Ile) + AMP + diphosphate. Functionally, catalyzes the attachment of isoleucine to tRNA(Ile). As IleRS can inadvertently accommodate and process structurally similar amino acids such as valine, to avoid such errors it has two additional distinct tRNA(Ile)-dependent editing activities. One activity is designated as 'pretransfer' editing and involves the hydrolysis of activated Val-AMP. The other activity is designated 'posttransfer' editing and involves deacylation of mischarged Val-tRNA(Ile). This chain is Isoleucine--tRNA ligase, found in Leptospira interrogans serogroup Icterohaemorrhagiae serovar Lai (strain 56601).